The following is a 450-amino-acid chain: UDP-N-acetylmuramoylalanine--D-glutamate ligase (450 aa).

Residue 119-125 coordinates ATP; that stretch reads GSNGKTT.

Belongs to the MurCDEF family.

The protein resides in the cytoplasm. The enzyme catalyses UDP-N-acetyl-alpha-D-muramoyl-L-alanine + D-glutamate + ATP = UDP-N-acetyl-alpha-D-muramoyl-L-alanyl-D-glutamate + ADP + phosphate + H(+). It functions in the pathway cell wall biogenesis; peptidoglycan biosynthesis. In terms of biological role, cell wall formation. Catalyzes the addition of glutamate to the nucleotide precursor UDP-N-acetylmuramoyl-L-alanine (UMA). The polypeptide is UDP-N-acetylmuramoylalanine--D-glutamate ligase (Streptococcus gordonii (strain Challis / ATCC 35105 / BCRC 15272 / CH1 / DL1 / V288)).